The following is a 369-amino-acid chain: MTKLFTPLHVGRMELANRIAMAPMTRYRASDNHVPLPIMKDYYAQRASVPGTLLITEATTISARAGGYANAPGIYNDAQIAAWKEVTDAVHAKGSYIYVQLWAVGRPANPQLLQAEGGYDLVSSSATAVSADAPTPRALSETEIYAWIADYAQAARNAVAAGFDGVEIHAANGYLIDQFTQDICNTRTDAWGGSVQGRARFALEVSRAVVEAVGADRTGIRFSPWSTFQGMRMKDPKPQFEYLAVQTAKLGLAYVHLVESRIAGGADVDATDRLDFFLRAYGKASPVIFAGGYDAESAVRAVDVEYADYDAIVGIGRPFISNPDLPFRVQNGIPFVPYDRATFYVPKDPKGYTDYAFSAEFQKAIEAAA.

FMN is bound by residues 23 to 25 (PMT), Ala58, Gln100, and His169. Substrate is bound by residues His169 and Asn172. The active-site Proton donor is the Tyr174. FMN-binding positions include Gly292, 316 to 317 (GR), and Arg317. Tyr344 contacts substrate.

Belongs to the NADH:flavin oxidoreductase/NADH oxidase family. In terms of assembly, monomer. FMN is required as a cofactor.

The catalysed reaction is dihydrochanoclavine-I aldehyde + NADP(+) = chanoclavine-I aldehyde + NADPH + H(+). It participates in alkaloid biosynthesis; ergot alkaloid biosynthesis. Its function is as follows. Chanoclavine-I aldehyde reductase; part of the gene cluster that mediates the biosynthesis of isofumigaclavines, fungal ergot alkaloids. The tryptophan dimethylallyltransferase ifgA catalyzes the first step of ergot alkaloid biosynthesis by condensing dimethylallyl diphosphate (DMAP) and tryptophan to form 4-dimethylallyl-L-tryptophan. The second step is catalyzed by the methyltransferase ifgB that methylates 4-dimethylallyl-L-tryptophan in the presence of S-adenosyl-L-methionine, resulting in the formation of N-methyl-dimethylallyl-L-tryptophan. The catalase ifgD and the FAD-dependent oxidoreductase ifgC then transform N-methyl-dimethylallyl-L-tryptophan to chanoclavine-I which is further oxidized by ifgE in the presence of NAD(+), resulting in the formation of chanoclavine-I aldehyde. The chanoclavine-I aldehyde reductases ifgG and/or fgaOx3 reduce chanoclavine-I aldehyde to dihydrochanoclavine-I aldehyde that spontaneously dehydrates to form 6,8-dimethyl-6,7-didehydroergoline. The festuclavine dehydrogenases ifgF1 and/or ifgF2 then catalyze the reduction of 6,8-dimethyl-6,7-didehydroergoline to form festuclavine. Hydrolysis of festuclavine by a yet undetermined cytochrome P450 monooxygenase (called ifgH) then leads to the formation of isofumigaclavine B which is in turn acetylated by ifgI to isofumigaclavine A. Penicillium roqueforti has interestingly at least two sets of genes for the consumption of chanoclavine-I aldehyde on three different loci, the OYEs ifgG/fgaOx3 and the festuclavine synthase homologs ifgF1/ifgF2. The reason for the duplication of these genes is unclear, probably to ensure the conversion of chanoclavine-I aldehyde by differential gene expression under various environmental conditions. In Penicillium roqueforti (strain FM164), this protein is Chanoclavine-I aldehyde reductase fgaOx3.